The chain runs to 59 residues: Large ribosomal subunit protein uL30 (59 aa).

This sequence belongs to the universal ribosomal protein uL30 family. Part of the 50S ribosomal subunit.

This chain is Large ribosomal subunit protein uL30, found in Bacillus licheniformis (strain ATCC 14580 / DSM 13 / JCM 2505 / CCUG 7422 / NBRC 12200 / NCIMB 9375 / NCTC 10341 / NRRL NRS-1264 / Gibson 46).